The primary structure comprises 79 residues: D-alanyl carrier protein (79 aa).

Positions Met-1–Met-77 constitute a Carrier domain. An O-(pantetheine 4'-phosphoryl)serine modification is found at Ser-35.

Belongs to the DltC family. 4'-phosphopantetheine is transferred from CoA to a specific serine of apo-DCP.

The protein localises to the cytoplasm. The protein operates within cell wall biogenesis; lipoteichoic acid biosynthesis. Functionally, carrier protein involved in the D-alanylation of lipoteichoic acid (LTA). The loading of thioester-linked D-alanine onto DltC is catalyzed by D-alanine--D-alanyl carrier protein ligase DltA. The DltC-carried D-alanyl group is further transferred to cell membrane phosphatidylglycerol (PG) by forming an ester bond, probably catalyzed by DltD. D-alanylation of LTA plays an important role in modulating the properties of the cell wall in Gram-positive bacteria, influencing the net charge of the cell wall. This chain is D-alanyl carrier protein, found in Streptococcus suis (strain 05ZYH33).